A 247-amino-acid polypeptide reads, in one-letter code: Acetoacetate decarboxylase (247 aa).

The active-site Schiff-base intermediate with acetoacetate is lysine 116.

Belongs to the ADC family.

The catalysed reaction is acetoacetate + H(+) = acetone + CO2. Functionally, catalyzes the conversion of acetoacetate to acetone and carbon dioxide. This Ralstonia nicotianae (strain ATCC BAA-1114 / GMI1000) (Ralstonia solanacearum) protein is Acetoacetate decarboxylase.